Reading from the N-terminus, the 247-residue chain is 3-deoxy-manno-octulosonate cytidylyltransferase (247 aa).

It belongs to the KdsB family.

The protein resides in the cytoplasm. It carries out the reaction 3-deoxy-alpha-D-manno-oct-2-ulosonate + CTP = CMP-3-deoxy-beta-D-manno-octulosonate + diphosphate. It functions in the pathway nucleotide-sugar biosynthesis; CMP-3-deoxy-D-manno-octulosonate biosynthesis; CMP-3-deoxy-D-manno-octulosonate from 3-deoxy-D-manno-octulosonate and CTP: step 1/1. Its pathway is bacterial outer membrane biogenesis; lipopolysaccharide biosynthesis. Activates KDO (a required 8-carbon sugar) for incorporation into bacterial lipopolysaccharide in Gram-negative bacteria. The protein is 3-deoxy-manno-octulosonate cytidylyltransferase of Bdellovibrio bacteriovorus (strain ATCC 15356 / DSM 50701 / NCIMB 9529 / HD100).